A 96-amino-acid polypeptide reads, in one-letter code: Protein RnfH (96 aa).

This sequence belongs to the UPF0125 (RnfH) family.

The polypeptide is Protein RnfH (Hahella chejuensis (strain KCTC 2396)).